A 324-amino-acid polypeptide reads, in one-letter code: Homeobox protein Nkx-2.5 (324 aa).

The segment at residues 138-197 (RRKPRVLFSQAQVYELERRFKQQRYLSAPERDQLASVLKLTSTQVKIWFQNRRYKCKRQR) is a DNA-binding region (homeobox).

It belongs to the NK-2 homeobox family. In terms of assembly, homodimer (via the homeobox); binds DNA as homodimer. Interacts (via the homeobox) with TBX5 (via the T-box); this complex binds DNA. Interacts with HIPK1 and HIPK2, but not HIPK3. Interacts with the C-terminal zinc finger of GATA4 through its homeobox domain. Also interacts with JARID2 which represses its ability to activate transcription of ANF. Interacts with FBLIM1. Interacts with TBX18. Interacts with histone methyltransferase NSD2 (via HMG box). Interacts with NEDD9. Interacts with TBX1. As to expression, expressed only in the heart.

It is found in the nucleus. Transcription factor required for the development of the heart and the spleen. During heart development, acts as a transcriptional activator of NPPA/ANF in cooperation with GATA4. May cooperate with TBX2 to negatively modulate expression of NPPA/ANF in the atrioventricular canal. Binds to the core DNA motif of NPPA promoter. Together with PBX1, required for spleen development through a mechanism that involves CDKN2B repression. Positively regulates transcription of genes such as COL3A1 and MMP2, resulting in increased pulmonary endothelial fibrosis in response to hypoxia. This Homo sapiens (Human) protein is Homeobox protein Nkx-2.5 (NKX2-5).